We begin with the raw amino-acid sequence, 264 residues long: SPARC (264 aa).

A signal peptide spans 1-16; that stretch reads MRYALAACLLLLAASS. Residues 52–74 enclose the Follistatin-like domain; that stretch reads PCEDHQCGWGKECVVGKKGEPTC. Intrachain disulfides connect C53-C64, C58-C74, C76-C110, C80-C103, C92-C135, C141-C228, and C236-C252. The Kazal-like domain maps to 68–137; the sequence is KKGEPTCECI…HLEYLGECKK (70 aa). N-linked (GlcNAc...) asparagine glycosylation occurs at N96. The 36-residue stretch at 224–259 folds into the EF-hand domain; it reads PMESCIKPFLEGCDANNDGNISIKEWGKCLGLKEGE. The Ca(2+) site is built by D237, N239, D241, N243, and E248. N243 is a glycosylation site (N-linked (GlcNAc...) asparagine).

It belongs to the SPARC family. Expressed by body wall and sex muscle cells. Probable association with basement membranes.

It localises to the secreted. The protein resides in the extracellular space. Its subcellular location is the extracellular matrix. It is found in the basement membrane. Functionally, has a high affinity for collagen. Affects nematode body morphology and mobility. Essential for C.elegans development and muscle function. The cysteine-rich region could have protease inhibitory activity or may provide the framework for a protein binding module. Probable role in skeletal morphogenesis. This chain is SPARC (ost-1), found in Caenorhabditis elegans.